The chain runs to 256 residues: Imidazole glycerol phosphate synthase subunit HisF (256 aa).

Residues aspartate 12 and aspartate 131 contribute to the active site.

The protein belongs to the HisA/HisF family. In terms of assembly, heterodimer of HisH and HisF.

It localises to the cytoplasm. It carries out the reaction 5-[(5-phospho-1-deoxy-D-ribulos-1-ylimino)methylamino]-1-(5-phospho-beta-D-ribosyl)imidazole-4-carboxamide + L-glutamine = D-erythro-1-(imidazol-4-yl)glycerol 3-phosphate + 5-amino-1-(5-phospho-beta-D-ribosyl)imidazole-4-carboxamide + L-glutamate + H(+). It functions in the pathway amino-acid biosynthesis; L-histidine biosynthesis; L-histidine from 5-phospho-alpha-D-ribose 1-diphosphate: step 5/9. IGPS catalyzes the conversion of PRFAR and glutamine to IGP, AICAR and glutamate. The HisF subunit catalyzes the cyclization activity that produces IGP and AICAR from PRFAR using the ammonia provided by the HisH subunit. The protein is Imidazole glycerol phosphate synthase subunit HisF of Pseudomonas syringae pv. tomato (strain ATCC BAA-871 / DC3000).